A 459-amino-acid chain; its full sequence is Probable acetate kinase (459 aa).

Asn9 lines the Mg(2+) pocket. Lys16 contacts ATP. Arg100 serves as a coordination point for substrate. The Proton donor/acceptor role is filled by Asp156. ATP is bound by residues 216-220 (HLGSG) and 299-301 (DFR). The tract at residues 308-338 (TTTSSPTPSPNPNPNPNPDPNPDPNPDPQNQ) is disordered. The segment covering 314 to 334 (TPSPNPNPNPNPDPNPDPNPD) has biased composition (pro residues). Glu441 is a binding site for Mg(2+).

This sequence belongs to the acetokinase family. The cofactor is Mg(2+).

The enzyme catalyses acetate + ATP = acetyl phosphate + ADP. It functions in the pathway metabolic intermediate biosynthesis; acetyl-CoA biosynthesis; acetyl-CoA from acetate: step 1/2. This chain is Probable acetate kinase, found in Chaetomium globosum (strain ATCC 6205 / CBS 148.51 / DSM 1962 / NBRC 6347 / NRRL 1970) (Soil fungus).